The sequence spans 480 residues: Dihydrolipoyllysine-residue acetyltransferase component 4 of pyruvate dehydrogenase complex, chloroplastic (480 aa).

The N-terminal 53 residues, 1-53 (MAVSSSSFLSTASLTNSKSNISFASSVSPSLRSVVFRSTTPATSHRRSMTVRS), are a transit peptide targeting the chloroplast. A Lipoyl-binding domain is found at 55–133 (IREIFMPALS…AAIGLLAETE (79 aa)). K96 carries the post-translational modification N6-lipoyllysine. 2 disordered regions span residues 140-168 (KSKAASKSSSSVAEAVVPSPPPVTSSPAP) and 224-245 (AGIAPSKSSIAPPPPPPPPVTA). A compositionally biased stretch (low complexity) spans 142–156 (KAASKSSSSVAEAVV). The Peripheral subunit-binding (PSBD) domain occupies 187–224 (VATPYAKKLAKQHKVDIESVAGTGPFGRITASDVETAA). The segment covering 234–243 (APPPPPPPPV) has biased composition (pro residues). Residue H453 is part of the active site.

The protein belongs to the 2-oxoacid dehydrogenase family. (R)-lipoate serves as cofactor.

The protein localises to the plastid. It is found in the chloroplast stroma. The enzyme catalyses N(6)-[(R)-dihydrolipoyl]-L-lysyl-[protein] + acetyl-CoA = N(6)-[(R)-S(8)-acetyldihydrolipoyl]-L-lysyl-[protein] + CoA. The pyruvate dehydrogenase complex catalyzes the overall conversion of pyruvate to acetyl-CoA and CO(2). It contains multiple copies of three enzymatic components: pyruvate dehydrogenase (E1), dihydrolipoamide acetyltransferase (E2) and lipoamide dehydrogenase (E3). This is Dihydrolipoyllysine-residue acetyltransferase component 4 of pyruvate dehydrogenase complex, chloroplastic (LTA2) from Arabidopsis thaliana (Mouse-ear cress).